A 179-amino-acid chain; its full sequence is Large ribosomal subunit protein uL5 (179 aa).

Belongs to the universal ribosomal protein uL5 family. Part of the 50S ribosomal subunit; part of the 5S rRNA/L5/L18/L25 subcomplex. Contacts the 5S rRNA and the P site tRNA. Forms a bridge to the 30S subunit in the 70S ribosome.

This is one of the proteins that bind and probably mediate the attachment of the 5S RNA into the large ribosomal subunit, where it forms part of the central protuberance. In the 70S ribosome it contacts protein S13 of the 30S subunit (bridge B1b), connecting the 2 subunits; this bridge is implicated in subunit movement. Contacts the P site tRNA; the 5S rRNA and some of its associated proteins might help stabilize positioning of ribosome-bound tRNAs. This chain is Large ribosomal subunit protein uL5, found in Alkaliphilus oremlandii (strain OhILAs) (Clostridium oremlandii (strain OhILAs)).